The sequence spans 260 residues: UPF0246 protein BTH_I1090 (260 aa).

The protein belongs to the UPF0246 family.

This Burkholderia thailandensis (strain ATCC 700388 / DSM 13276 / CCUG 48851 / CIP 106301 / E264) protein is UPF0246 protein BTH_I1090.